The sequence spans 212 residues: Cytidylate kinase (212 aa).

Residue 9–17 (GPAAAGKGT) participates in ATP binding.

It belongs to the cytidylate kinase family. Type 1 subfamily.

It localises to the cytoplasm. It catalyses the reaction CMP + ATP = CDP + ADP. It carries out the reaction dCMP + ATP = dCDP + ADP. In Sinorhizobium medicae (strain WSM419) (Ensifer medicae), this protein is Cytidylate kinase.